Reading from the N-terminus, the 203-residue chain is ATP-dependent Clp protease proteolytic subunit (203 aa).

S107 functions as the Nucleophile in the catalytic mechanism. Residue H132 is part of the active site.

The protein belongs to the peptidase S14 family. As to quaternary structure, fourteen ClpP subunits assemble into 2 heptameric rings which stack back to back to give a disk-like structure with a central cavity, resembling the structure of eukaryotic proteasomes.

Its subcellular location is the cytoplasm. The catalysed reaction is Hydrolysis of proteins to small peptides in the presence of ATP and magnesium. alpha-casein is the usual test substrate. In the absence of ATP, only oligopeptides shorter than five residues are hydrolyzed (such as succinyl-Leu-Tyr-|-NHMec, and Leu-Tyr-Leu-|-Tyr-Trp, in which cleavage of the -Tyr-|-Leu- and -Tyr-|-Trp bonds also occurs).. In terms of biological role, cleaves peptides in various proteins in a process that requires ATP hydrolysis. Has a chymotrypsin-like activity. Plays a major role in the degradation of misfolded proteins. The protein is ATP-dependent Clp protease proteolytic subunit of Shewanella pealeana (strain ATCC 700345 / ANG-SQ1).